We begin with the raw amino-acid sequence, 1097 residues long: DNA-directed RNA polymerase subunit beta (1097 aa).

The interval Leu1070–Asp1097 is disordered. Positions Arg1077–Thr1091 are enriched in polar residues.

This sequence belongs to the RNA polymerase beta chain family. In terms of assembly, in cyanobacteria the RNAP catalytic core is composed of 2 alpha, 1 beta, 1 beta', 1 gamma and 1 omega subunit. When a sigma factor is associated with the core the holoenzyme is formed, which can initiate transcription.

It carries out the reaction RNA(n) + a ribonucleoside 5'-triphosphate = RNA(n+1) + diphosphate. Its function is as follows. DNA-dependent RNA polymerase catalyzes the transcription of DNA into RNA using the four ribonucleoside triphosphates as substrates. The polypeptide is DNA-directed RNA polymerase subunit beta (Prochlorococcus marinus (strain MIT 9515)).